The chain runs to 333 residues: Squamosa promoter-binding-like protein 8 (333 aa).

The segment at 1 to 28 (MLDYEWDNPSSIVLSGDERNPDSDPTRS) is disordered. Positions 16–25 (GDERNPDSDP) are enriched in basic and acidic residues. Residues 179–269 (MANSLSTPRC…RKCHQSASAT (91 aa)) form a sufficient and necessary for DNA binding region. The SBP-type zinc finger occupies 185-262 (TPRCQAEGCN…ADHNRRRRKC (78 aa)). Residues cysteine 188, cysteine 193, cysteine 210, histidine 213, cysteine 229, cysteine 232, histidine 236, and cysteine 248 each contribute to the Zn(2+) site. The Bipartite nuclear localization signal signature appears at 245-261 (KRSCRKRLADHNRRRRK). Disordered stretches follow at residues 254-303 (DHNR…TISL) and 314-333 (TASS…FSSG). A compositionally biased stretch (polar residues) spans 264–284 (QSASATQDTGTGKTTPKSPND). Positions 289–299 (ASSSPSSNAPP) are enriched in low complexity.

The cofactor is Zn(2+). As to expression, expressed in shoot apical region and early floral tissues. Transcripts levels increase in developing pollen sacs, and decrease in later stage of anther development. Strongly expressed in the placental region of the carpels.

The protein resides in the nucleus. It localises to the cytoplasm. In terms of biological role, trans-acting factor that binds specifically to the consensus nucleotide sequence 5'-TNCGTACAA-3'. Binds specifically to the 5'-GTAC-3' core sequence. Involved in development and floral organogenesis. Required for ovule differentiation, pollen production, filament elongation, seed formation and siliques elongation. Also seems to play a role in the formation of trichomes on sepals. May positively modulate gibberellin (GA) signaling in flower. The chain is Squamosa promoter-binding-like protein 8 (SPL8) from Arabidopsis thaliana (Mouse-ear cress).